The primary structure comprises 403 residues: S-adenosylmethionine synthase (403 aa).

141–146 (GQGSVD) provides a ligand contact to ATP.

Belongs to the AdoMet synthase 2 family. Requires Mg(2+) as cofactor.

The catalysed reaction is L-methionine + ATP + H2O = S-adenosyl-L-methionine + phosphate + diphosphate. The protein operates within amino-acid biosynthesis; S-adenosyl-L-methionine biosynthesis; S-adenosyl-L-methionine from L-methionine: step 1/1. Functionally, catalyzes the formation of S-adenosylmethionine from methionine and ATP. The polypeptide is S-adenosylmethionine synthase (Methanococcus aeolicus (strain ATCC BAA-1280 / DSM 17508 / OCM 812 / Nankai-3)).